Reading from the N-terminus, the 276-residue chain is Dermonecrotic toxin LspiSicTox-betaIE4ii (276 aa).

Residue histidine 5 is part of the active site. 2 residues coordinate Mg(2+): glutamate 25 and aspartate 27. The active-site Nucleophile is histidine 41. 2 disulfides stabilise this stretch: cysteine 45-cysteine 51 and cysteine 47-cysteine 189. Aspartate 85 contributes to the Mg(2+) binding site.

This sequence belongs to the arthropod phospholipase D family. Class II subfamily. It depends on Mg(2+) as a cofactor. In terms of tissue distribution, expressed by the venom gland.

The protein resides in the secreted. The catalysed reaction is an N-(acyl)-sphingosylphosphocholine = an N-(acyl)-sphingosyl-1,3-cyclic phosphate + choline. It carries out the reaction an N-(acyl)-sphingosylphosphoethanolamine = an N-(acyl)-sphingosyl-1,3-cyclic phosphate + ethanolamine. The enzyme catalyses a 1-acyl-sn-glycero-3-phosphocholine = a 1-acyl-sn-glycero-2,3-cyclic phosphate + choline. It catalyses the reaction a 1-acyl-sn-glycero-3-phosphoethanolamine = a 1-acyl-sn-glycero-2,3-cyclic phosphate + ethanolamine. In terms of biological role, dermonecrotic toxins cleave the phosphodiester linkage between the phosphate and headgroup of certain phospholipids (sphingolipid and lysolipid substrates), forming an alcohol (often choline) and a cyclic phosphate. This toxin acts on sphingomyelin (SM). It may also act on ceramide phosphoethanolamine (CPE), lysophosphatidylcholine (LPC) and lysophosphatidylethanolamine (LPE), but not on lysophosphatidylserine (LPS), and lysophosphatidylglycerol (LPG). It acts by transphosphatidylation, releasing exclusively cyclic phosphate products as second products. Induces dermonecrosis, hemolysis, increased vascular permeability, edema, inflammatory response, and platelet aggregation. This is Dermonecrotic toxin LspiSicTox-betaIE4ii from Loxosceles spinulosa (Recluse spider).